The primary structure comprises 486 residues: Serine/threonine-protein kinase 4 (486 aa).

One can recognise a Protein kinase domain in the interval Phe29–Val280. Residues Leu35–Val43 and Lys58 contribute to the ATP site. Asp148 serves as the catalytic Proton acceptor. Thr182 is subject to Phosphothreonine; by autocatalysis. A coiled-coil region spans residues Ile288–Thr324. The segment at Glu305–Ala332 is disordered. A compositionally biased stretch (acidic residues) spans Asp312 to Asp325. The SARAH domain occupies Tyr432–Lys479.

This sequence belongs to the protein kinase superfamily. STE Ser/Thr protein kinase family. STE20 subfamily. Homodimer; mediated via the coiled-coil region. The cofactor is Mg(2+). In terms of processing, proteolytically cleaved by caspase-3 during apoptosis at Asp-325 resulting in a 37 kDa form. Proteolytic cleavage results in kinase activation and nuclear translocation of the truncated form (MST1/N).

It localises to the cytoplasm. Its subcellular location is the nucleus. It catalyses the reaction L-seryl-[protein] + ATP = O-phospho-L-seryl-[protein] + ADP + H(+). The catalysed reaction is L-threonyl-[protein] + ATP = O-phospho-L-threonyl-[protein] + ADP + H(+). With respect to regulation, the C-terminal non-catalytic region inhibits the kinase activity, the enzyme is activated by caspase-cleavage. Homodimerization and autophosphorylation of Thr-182 is also required for full activation. Stress-activated, pro-apoptotic kinase which, following caspase-cleavage, enters the nucleus and induces chromatin condensation followed by internucleosomal DNA fragmentation. Key component of the Hippo signaling pathway which plays a pivotal role in organ size control and tumor suppression by restricting proliferation and promoting apoptosis. The core of this pathway is composed of a kinase cascade wherein STK3/MST2 and STK4/MST1, in complex with its regulatory protein SAV1, phosphorylates and activates LATS1/2 in complex with its regulatory protein MOB1, which in turn phosphorylates and inactivates YAP1 oncoprotein and WWTR1/TAZ. Phosphorylation of YAP1 by LATS2 inhibits its translocation into the nucleus to regulate cellular genes important for cell proliferation, cell death, and cell migration. Phosphorylates 'Ser-14' of histone H2B (H2BS14ph) during apoptosis. Phosphorylates FOXO3 upon oxidative stress, which results in its nuclear translocation and cell death initiation. The chain is Serine/threonine-protein kinase 4 (STK4) from Gallus gallus (Chicken).